The primary structure comprises 289 residues: MIILKRLLQDKGAVIALGIIVLYVFLGLAAPLVTFYDPNHIDTANKFAGISFQHLLGTDHLGRDILTRLIYAIRPSLLYVFVALFVSVLIGSILGFLSGYFQGFVDALIMRACDVMLAFPSYVVTLALIALFGMGAENIIMAFILTRWAWFCRVIRTSVMQYTASDHVRFAKTIGMNDMKIIHKHIMPLTLADIAIISSSSMCSMILQISGFSFLGLGVKAPTAEWGMMLNEARKVMFTHPEMMFAPGIAIVIIVMAFNFLSDALQIAIDPRISSKDKLRSVKKGVVQS.

Transmembrane regions (helical) follow at residues 13–33 (AVIA…APLV), 77–97 (LLYV…LGFL), 115–135 (VMLA…FGMG), 194–214 (IAII…GFSF), and 249–269 (IAIV…QIAI). The ABC transmembrane type-1 domain occupies 73–262 (IRPSLLYVFV…IIVMAFNFLS (190 aa)).

It belongs to the binding-protein-dependent transport system permease family. In terms of assembly, the complex is composed of two ATP-binding proteins (CntD and CntF), two transmembrane proteins (CntB and CntC) and a solute-binding protein (CntA).

It is found in the cell membrane. In terms of biological role, part of the ABC transporter complex CntABCDF (Opp1) involved in the uptake of metal in complex with the metallophore staphylopine (StP). May be involved in the import of a large array of divalent metals ions such as nickel, cobalt, zinc, copper and iron. Probably responsible for the translocation of the substrate across the membrane. The protein is Metal-staphylopine import system permease protein CntC of Staphylococcus aureus (strain Mu50 / ATCC 700699).